The chain runs to 157 residues: UPF0225 protein PA14_50900 (157 aa).

The protein belongs to the UPF0225 family.

In Pseudomonas aeruginosa (strain UCBPP-PA14), this protein is UPF0225 protein PA14_50900.